The sequence spans 136 residues: Biopolymer transport protein exbD2 (136 aa).

Residues 1 to 23 (MAFSTGGNRGPMADINVTPLVDV) are Cytoplasmic-facing. The chain crosses the membrane as a helical span at residues 24–44 (MLVLLIIFIVTAPIMTYPIAV). The Periplasmic segment spans residues 45–136 (DLPQRVLNPP…SQMKKIGFMQ (92 aa)).

Belongs to the ExbD/TolR family. The accessory proteins ExbB and ExbD seem to form a complex with TonB.

It localises to the cell inner membrane. In terms of biological role, involved in the TonB-dependent energy-dependent transport of various receptor-bound substrates. This Xanthomonas campestris pv. campestris (strain ATCC 33913 / DSM 3586 / NCPPB 528 / LMG 568 / P 25) protein is Biopolymer transport protein exbD2 (exbD2).